Here is a 380-residue protein sequence, read N- to C-terminus: Chaperone protein DnaJ (380 aa).

One can recognise a J domain in the interval 5 to 72 (DYYDTLGVPK…QKRAAYDQYG (68 aa)). The interval 21–47 (IKKAYRKLAMKHHPDRNQGDTSKVSED) is disordered. Over residues 24-34 (AYRKLAMKHHP) the composition is skewed to basic residues. Residues 35 to 47 (DRNQGDTSKVSED) show a composition bias toward basic and acidic residues. Residues 139–217 (GKEAQIRIPS…CHGVGKTKNN (79 aa)) form a CR-type zinc finger. 8 residues coordinate Zn(2+): C152, C155, C169, C172, C191, C194, C205, and C208. 4 CXXCXGXG motif repeats span residues 152–159 (CGICHGTG), 169–176 (CTTCHGHG), 191–198 (CPQCKGSG), and 205–212 (CVACHGVG).

It belongs to the DnaJ family. Homodimer. The cofactor is Zn(2+).

The protein resides in the cytoplasm. In terms of biological role, participates actively in the response to hyperosmotic and heat shock by preventing the aggregation of stress-denatured proteins and by disaggregating proteins, also in an autonomous, DnaK-independent fashion. Unfolded proteins bind initially to DnaJ; upon interaction with the DnaJ-bound protein, DnaK hydrolyzes its bound ATP, resulting in the formation of a stable complex. GrpE releases ADP from DnaK; ATP binding to DnaK triggers the release of the substrate protein, thus completing the reaction cycle. Several rounds of ATP-dependent interactions between DnaJ, DnaK and GrpE are required for fully efficient folding. Also involved, together with DnaK and GrpE, in the DNA replication of plasmids through activation of initiation proteins. The chain is Chaperone protein DnaJ from Polaromonas naphthalenivorans (strain CJ2).